The following is a 252-amino-acid chain: Ditrans,polycis-undecaprenyl-diphosphate synthase ((2E,6E)-farnesyl-diphosphate specific) (252 aa).

Aspartate 24 is a catalytic residue. Aspartate 24 lines the Mg(2+) pocket. Residues 25 to 28 (GNGR), tryptophan 29, arginine 37, histidine 41, and 69 to 71 (SSE) contribute to the substrate site. Catalysis depends on asparagine 72, which acts as the Proton acceptor. Residues tryptophan 73, arginine 75, and arginine 192 each contribute to the substrate site. Histidine 197 is a Mg(2+) binding site. 198-200 (RIS) provides a ligand contact to substrate. A Mg(2+)-binding site is contributed by glutamate 211.

Belongs to the UPP synthase family. In terms of assembly, homodimer. Mg(2+) serves as cofactor.

It carries out the reaction 8 isopentenyl diphosphate + (2E,6E)-farnesyl diphosphate = di-trans,octa-cis-undecaprenyl diphosphate + 8 diphosphate. Catalyzes the sequential condensation of isopentenyl diphosphate (IPP) with (2E,6E)-farnesyl diphosphate (E,E-FPP) to yield (2Z,6Z,10Z,14Z,18Z,22Z,26Z,30Z,34E,38E)-undecaprenyl diphosphate (di-trans,octa-cis-UPP). UPP is the precursor of glycosyl carrier lipid in the biosynthesis of bacterial cell wall polysaccharide components such as peptidoglycan and lipopolysaccharide. This is Ditrans,polycis-undecaprenyl-diphosphate synthase ((2E,6E)-farnesyl-diphosphate specific) from Yersinia pestis.